Here is a 24-residue protein sequence, read N- to C-terminus: SLGGKPDLRPCYPPCHYIPRPKPR.

A disulfide bridge connects residues C11 and C15.

This sequence belongs to the waglerin family. In terms of assembly, monomer. In terms of tissue distribution, expressed by the venom gland.

Its subcellular location is the secreted. Waglerin-2 selectively blocks the epsilon subunit of muscle nicotinic acetylcholine receptor (nAChR). Also has effects on rodent ionotropic GABA(A) receptors (GABR), since it potentiates I(GABA) in some neurons and depresses I(GABA) in others. In mice, it elicits tachypnea, ocular proptosis, rapid collapse and spasms, whereas no toxic effects on respiration and blood pressure are observed in rats. Functionally, waglerin-4 selectively blocks the epsilon subunit of muscle nicotinic acetylcholine receptor. It elicits tachypnea, ocular proptosis, rapid collapse and spasms in mice. It causes death by respiratory failure. This chain is Waglerin-4, found in Tropidolaemus wagleri (Wagler's pit viper).